We begin with the raw amino-acid sequence, 300 residues long: Shikimate kinase, chloroplastic (300 aa).

Residues 1–65 constitute a chloroplast transit peptide; that stretch reads MEARVSQSLQ…SDRRVQLKVS (65 aa). ATP is bound at residue 111–118; the sequence is GMMGCGKT. T118 is a Mg(2+) binding site. Substrate contacts are provided by D136, R161, and G183. R222 contributes to the ATP binding site.

This sequence belongs to the shikimate kinase family. Mg(2+) is required as a cofactor.

The protein localises to the plastid. Its subcellular location is the chloroplast. The catalysed reaction is shikimate + ATP = 3-phosphoshikimate + ADP + H(+). Its pathway is metabolic intermediate biosynthesis; chorismate biosynthesis; chorismate from D-erythrose 4-phosphate and phosphoenolpyruvate: step 5/7. In terms of biological role, catalyzes the specific phosphorylation of the 3-hydroxyl group of shikimic acid using ATP as a cosubstrate. In Solanum lycopersicum (Tomato), this protein is Shikimate kinase, chloroplastic (SK).